The sequence spans 226 residues: MMLRIPALLSPDEVRQCRQALEQAPWQDGRATAGPLAAQVKANLQLPLDSQAGQAIGNLILDKLGASALFMSATLPLKVLPPRFNRYEGGGTYGNHIDNAIFTIPGTAIKVRSDVSTTVFFSEPDEYEGGELIVEDTFGHQSVKLAAGDAIVYPGTSLHRVNPVTRGTRYASFFWTHSLVASDEKRRILFDLDQQIQQLTVRHPGDPALSALSGTYHNLLRMWSQA.

The Fe2OG dioxygenase domain occupies 78 to 178 (KVLPPRFNRY…RYASFFWTHS (101 aa)). Residues His-96, Asp-98, and His-159 each contribute to the Fe cation site. Arg-169 contacts 2-oxoglutarate.

Fe(2+) is required as a cofactor. Requires L-ascorbate as cofactor.

This chain is PKHD-type hydroxylase Daci_1172, found in Delftia acidovorans (strain DSM 14801 / SPH-1).